The following is a 131-amino-acid chain: Translation initiation factor 5A (131 aa).

The residue at position 37 (Lys37) is a Hypusine.

Belongs to the eIF-5A family.

It is found in the cytoplasm. Functionally, functions by promoting the formation of the first peptide bond. In Methanococcus maripaludis (strain DSM 14266 / JCM 13030 / NBRC 101832 / S2 / LL), this protein is Translation initiation factor 5A.